A 164-amino-acid polypeptide reads, in one-letter code: Large ribosomal subunit protein bL9 (164 aa).

It belongs to the bacterial ribosomal protein bL9 family.

In terms of biological role, binds to the 23S rRNA. This is Large ribosomal subunit protein bL9 from Borrelia hermsii (strain HS1 / DAH).